We begin with the raw amino-acid sequence, 120 residues long: Chaperonin GroEL (120 aa).

23–27 provides a ligand contact to ATP; it reads DGTTT.

The protein belongs to the chaperonin (HSP60) family. Forms a cylinder of 14 subunits composed of two heptameric rings stacked back-to-back. Interacts with the co-chaperonin GroES.

The protein localises to the cytoplasm. The catalysed reaction is ATP + H2O + a folded polypeptide = ADP + phosphate + an unfolded polypeptide.. In terms of biological role, together with its co-chaperonin GroES, plays an essential role in assisting protein folding. The GroEL-GroES system forms a nano-cage that allows encapsulation of the non-native substrate proteins and provides a physical environment optimized to promote and accelerate protein folding. This Mycobacterium intracellulare protein is Chaperonin GroEL.